Consider the following 93-residue polypeptide: Bublin coiled-coil protein (93 aa).

2 disordered regions span residues 1–26 and 74–93; these read MAGP…GDTF and QQQS…QPPA. Acidic residues predominate over residues 17 to 26; that stretch reads DEGDEGGDTF. A coiled-coil region spans residues 59–80; the sequence is LKELLESNRQTRLEFQQQSKQL.

This sequence belongs to the UPF0184 (EST00098) family.

The protein localises to the cell junction. The protein resides in the cytoplasm. Its subcellular location is the cytoskeleton. Its function is as follows. Essential for intermediate filament organization in intestinal cells, interacts with intermediate filament and regulates intestinal lumen morphology. The chain is Bublin coiled-coil protein (BBLN) from Taeniopygia guttata (Zebra finch).